Here is a 351-residue protein sequence, read N- to C-terminus: AA9 family lytic polysaccharide monooxygenase A (351 aa).

An N-terminal signal peptide occupies residues 1-20 (MSNKAATLLAALSGAALVAA). Cu(2+)-binding residues include histidine 21 and histidine 107. A disulfide bond links cysteine 76 and cysteine 196. Residues histidine 182 and glutamine 191 each coordinate O2. Residue tyrosine 193 participates in Cu(2+) binding. The CBM1 domain maps to 315 to 351 (GVAPKWGQCGGNGWTGPTVCASGSTCTVLNPYYSQCI).

This sequence belongs to the polysaccharide monooxygenase AA9 family. It depends on Cu(2+) as a cofactor.

It is found in the secreted. It catalyses the reaction [(1-&gt;4)-beta-D-glucosyl]n+m + reduced acceptor + O2 = 4-dehydro-beta-D-glucosyl-[(1-&gt;4)-beta-D-glucosyl]n-1 + [(1-&gt;4)-beta-D-glucosyl]m + acceptor + H2O.. Functionally, lytic polysaccharide monooxygenase (LPMO) that depolymerizes crystalline and amorphous polysaccharides via the oxidation of scissile alpha- or beta-(1-4)-glycosidic bonds, yielding C1 and C4 oxidation products. Catalysis by LPMOs requires the reduction of the active-site copper from Cu(II) to Cu(I) by a reducing agent and H(2)O(2) or O(2) as a cosubstrate. The sequence is that of AA9 family lytic polysaccharide monooxygenase A from Podospora anserina (strain S / ATCC MYA-4624 / DSM 980 / FGSC 10383) (Pleurage anserina).